Reading from the N-terminus, the 337-residue chain is Pyridoxal 5'-phosphate synthase subunit PdxS (337 aa).

Asp-65 contributes to the D-ribose 5-phosphate binding site. The active-site Schiff-base intermediate with D-ribose 5-phosphate is the Lys-122. Position 194 (Gly-194) interacts with D-ribose 5-phosphate. Lys-206 serves as a coordination point for D-glyceraldehyde 3-phosphate. D-ribose 5-phosphate-binding positions include Gly-255 and 276–277; that span reads GS.

It belongs to the PdxS/SNZ family. As to quaternary structure, in the presence of PdxT, forms a dodecamer of heterodimers.

It catalyses the reaction aldehydo-D-ribose 5-phosphate + D-glyceraldehyde 3-phosphate + L-glutamine = pyridoxal 5'-phosphate + L-glutamate + phosphate + 3 H2O + H(+). The protein operates within cofactor biosynthesis; pyridoxal 5'-phosphate biosynthesis. Its function is as follows. Catalyzes the formation of pyridoxal 5'-phosphate from ribose 5-phosphate (RBP), glyceraldehyde 3-phosphate (G3P) and ammonia. The ammonia is provided by the PdxT subunit. Can also use ribulose 5-phosphate and dihydroxyacetone phosphate as substrates, resulting from enzyme-catalyzed isomerization of RBP and G3P, respectively. This is Pyridoxal 5'-phosphate synthase subunit PdxS from Metallosphaera sedula (strain ATCC 51363 / DSM 5348 / JCM 9185 / NBRC 15509 / TH2).